The sequence spans 663 residues: Methionine--tRNA ligase (663 aa).

Positions 10-20 (AYTNGPLHLGH) match the 'HIGH' region motif. Zn(2+)-binding residues include cysteine 142, cysteine 145, cysteine 154, and cysteine 157. The short motif at 323–327 (KMSTS) is the 'KMSKS' region element. Threonine 326 lines the ATP pocket. The 101-residue stretch at 563 to 663 (YFGNVDLRVG…RDLPVGSKIH (101 aa)) folds into the tRNA-binding domain.

It belongs to the class-I aminoacyl-tRNA synthetase family. MetG type 1 subfamily. Homodimer. The cofactor is Zn(2+).

Its subcellular location is the cytoplasm. The catalysed reaction is tRNA(Met) + L-methionine + ATP = L-methionyl-tRNA(Met) + AMP + diphosphate. Its function is as follows. Is required not only for elongation of protein synthesis but also for the initiation of all mRNA translation through initiator tRNA(fMet) aminoacylation. This Methanococcus maripaludis (strain C7 / ATCC BAA-1331) protein is Methionine--tRNA ligase.